Here is a 466-residue protein sequence, read N- to C-terminus: MAKTLYEKLFDAHVVYEAQNETPLLYIDRHLVHEVTSPQAFDGLRAHGRQVRQPGKTFATMDHNVSTQTKDINASGEMARIQMQELIKNCKEFGVELYDLNHPYQGIVHVMGPEQGVTLPGMTIVCGDSHTATHGAFGALAFGIGTSEVEHVLATQTLKQGRAKTMKIEVQGKAAPGITAKDIVLAIIGKTGSAGGTGHVVEFCGEAIRDLSMEGRMTLCNMAIEMGAKAGLVAPDETTFNYVRGRLHAPKGKDFDDAVAYWKTLKTDDGATFDTVVTLQAAEIAPQVTWGTNPGQVISVTDNIPDPASFSDPVERASAEKALAYMGLKSGIPLTEVAIDKVFIGSCTNSRIEDLRAAAEIAKGRKVAPGVQALVVPGSGPVKAQAEAEGLDKIFIEAGFEWRLPGCSMCLAMNNDRLNPGERCASTSNRNFEGRQGRGGRTHLVSPAMAAAAAVTGHFADIRNLK.

Residues cysteine 347, cysteine 407, and cysteine 410 each contribute to the [4Fe-4S] cluster site.

It belongs to the aconitase/IPM isomerase family. LeuC type 1 subfamily. As to quaternary structure, heterodimer of LeuC and LeuD. The cofactor is [4Fe-4S] cluster.

The enzyme catalyses (2R,3S)-3-isopropylmalate = (2S)-2-isopropylmalate. It functions in the pathway amino-acid biosynthesis; L-leucine biosynthesis; L-leucine from 3-methyl-2-oxobutanoate: step 2/4. Functionally, catalyzes the isomerization between 2-isopropylmalate and 3-isopropylmalate, via the formation of 2-isopropylmaleate. The polypeptide is 3-isopropylmalate dehydratase large subunit (Klebsiella pneumoniae subsp. pneumoniae (strain ATCC 700721 / MGH 78578)).